An 814-amino-acid chain; its full sequence is Kinesin-like protein KIF6 (814 aa).

The region spanning 5–345 (TIQIFARVKP…CRFAQRVALI (341 aa)) is the Kinesin motor domain. ATP is bound at residue 97–104 (GQTGSGKT). Coiled coils occupy residues 356–385 (NPRLVIKRLQKEIQELKDELAMVTGEQRTE), 456–494 (LKEEEYRKLRDILKQRDNEINILVNMLKKEKKKAQEALH), and 588–683 (EAKA…KEFE). The interval 752–788 (LPSPCPSPHSQKQSSTSTPLEDSIPKRPVSSIPLTGD) is disordered. Positions 759 to 771 (PHSQKQSSTSTPL) are enriched in polar residues.

This sequence belongs to the TRAFAC class myosin-kinesin ATPase superfamily. Kinesin family.

It localises to the cytoplasm. The protein resides in the cytoskeleton. This is Kinesin-like protein KIF6 (KIF6) from Homo sapiens (Human).